The sequence spans 203 residues: Translation machinery-associated protein 16 (203 aa).

Positions M1 to K39 are disordered. ADP-ribosylserine is present on S9. A compositionally biased stretch (basic and acidic residues) spans R29 to K39.

It belongs to the TMA16 family. As to quaternary structure, associates with pre-60S ribosomal particles.

The protein resides in the nucleus. Involved in the biogenesis of the 60S ribosomal subunit in the nucleus. In Homo sapiens (Human), this protein is Translation machinery-associated protein 16 (TMA16).